A 437-amino-acid polypeptide reads, in one-letter code: Protein farnesyltransferase subunit beta (437 aa).

PFTB repeat units lie at residues 123-164 (ATDV…CIIG), 174-215 (REKL…SLTN), 222-263 (FEGT…VILK), 270-312 (LKSL…PLLH), and 332-374 (QQAL…SIAQ). (2E,6E)-farnesyl diphosphate contacts are provided by residues 248–251 (HGGY) and 291–294 (RCNK). Zn(2+) is bound by residues Asp297 and Cys299. 300–303 (YSFW) contributes to the (2E,6E)-farnesyl diphosphate binding site. His362 lines the Zn(2+) pocket. Ser432 bears the Phosphoserine mark. At Thr436 the chain carries Phosphothreonine.

The protein belongs to the protein prenyltransferase subunit beta family. Heterodimer of FNTA and FNTB. Requires Zn(2+) as cofactor.

It carries out the reaction L-cysteinyl-[protein] + (2E,6E)-farnesyl diphosphate = S-(2E,6E)-farnesyl-L-cysteinyl-[protein] + diphosphate. Essential subunit of the farnesyltransferase complex. Catalyzes the transfer of a farnesyl moiety from farnesyl diphosphate to a cysteine at the fourth position from the C-terminus of several proteins having the C-terminal sequence Cys-aliphatic-aliphatic-X. The sequence is that of Protein farnesyltransferase subunit beta (Fntb) from Rattus norvegicus (Rat).